The following is a 591-amino-acid chain: tRNA 5-methylaminomethyl-2-thiouridine biosynthesis bifunctional protein MnmC (591 aa).

A tRNA (mnm(5)s(2)U34)-methyltransferase region spans residues 1-232 (MTPTAPSPLV…KRERLEAWRP (232 aa)). Positions 247–591 (IGGGIAGAAL…FDSPVTRSRL (345 aa)) are FAD-dependent cmnm(5)s(2)U34 oxidoreductase.

In the N-terminal section; belongs to the methyltransferase superfamily. tRNA (mnm(5)s(2)U34)-methyltransferase family. The protein in the C-terminal section; belongs to the DAO family. The cofactor is FAD.

It localises to the cytoplasm. The catalysed reaction is 5-aminomethyl-2-thiouridine(34) in tRNA + S-adenosyl-L-methionine = 5-methylaminomethyl-2-thiouridine(34) in tRNA + S-adenosyl-L-homocysteine + H(+). Functionally, catalyzes the last two steps in the biosynthesis of 5-methylaminomethyl-2-thiouridine (mnm(5)s(2)U) at the wobble position (U34) in tRNA. Catalyzes the FAD-dependent demodification of cmnm(5)s(2)U34 to nm(5)s(2)U34, followed by the transfer of a methyl group from S-adenosyl-L-methionine to nm(5)s(2)U34, to form mnm(5)s(2)U34. This Caulobacter vibrioides (strain ATCC 19089 / CIP 103742 / CB 15) (Caulobacter crescentus) protein is tRNA 5-methylaminomethyl-2-thiouridine biosynthesis bifunctional protein MnmC.